The chain runs to 465 residues: Protein maelstrom (465 aa).

A DNA-binding region (HMG box) is located at residues 2 to 69 (APKKHSAFMV…ADRAKRERLN (68 aa)). Disordered stretches follow at residues 373 to 394 (NQSEDVLLSSSRPSVESSSYTP) and 419 to 443 (SKHRGLDVSAQRERNAGAWNLPTHS). Low complexity predominate over residues 381 to 391 (SSSRPSVESSS). Over residues 422–433 (RGLDVSAQRERN) the composition is skewed to basic and acidic residues.

The protein belongs to the maelstrom family.

It localises to the cytoplasm. The protein localises to the nucleus. Involved both in the piRNA and miRNA metabolic processes. As a component of the meiotic nuage, plays a central role during oogenesis by repressing transposable elements and preventing their mobilization, which is essential for the germline integrity. Repression of transposable elements is mediated via the piRNA metabolic process, which mediates the repression of transposable elements during meiosis by forming complexes composed of piRNAs and Piwi proteins and governs the repression of transposons. As a nuclear component, it is required for proper differentiation in the germline stem cell (GSC) lineage by repressing microRNA-7 (miR-7), thereby acting as an indirect regulator of bag-of-marbles (Bam). Acts by binding to the promoter of miR-7 gene and repressing its expression; miR-7 repression alleviates the Bam repression by miR-7, thereby allowing differentiation in the germline stem cell (GSC) lineage. The chain is Protein maelstrom (mael) from Drosophila erecta (Fruit fly).